Reading from the N-terminus, the 386-residue chain is Histidinol-phosphate aminotransferase (386 aa).

Lys-240 is subject to N6-(pyridoxal phosphate)lysine.

This sequence belongs to the class-II pyridoxal-phosphate-dependent aminotransferase family. Histidinol-phosphate aminotransferase subfamily. Homodimer. Pyridoxal 5'-phosphate serves as cofactor.

It carries out the reaction L-histidinol phosphate + 2-oxoglutarate = 3-(imidazol-4-yl)-2-oxopropyl phosphate + L-glutamate. The protein operates within amino-acid biosynthesis; L-histidine biosynthesis; L-histidine from 5-phospho-alpha-D-ribose 1-diphosphate: step 7/9. This Bifidobacterium longum (strain NCC 2705) protein is Histidinol-phosphate aminotransferase.